A 1529-amino-acid chain; its full sequence is Slit homolog 2 protein (1529 aa).

The first 30 residues, 1–30 (MRGVGWQMLSLSLGLVLAILNKVAPQACPA), serve as a signal peptide directing secretion. The LRRNT domain occupies 31–55 (QCSCSGSTVDCHGLALRSVPRNIPR). LRR repeat units lie at residues 56–77 (NTER…DFAG), 80–101 (HLRV…AFQD), 104–125 (ELER…LFLG), 128–149 (KLYR…AFRG), 152–173 (DIKN…AFRA), and 176–197 (DLEV…SFNH). N-linked (GlcNAc...) asparagine glycosylation occurs at asparagine 66. N-linked (GlcNAc...) asparagine glycosylation is present at asparagine 186. The LRRCT 1 domain occupies 209–259 (NNLYCDCHLAWLSDWLRQRPRVGLYTQCMGPSHLRGHNVAEVQKREFVCSG). An LRRNT 2 domain is found at 264–300 (MAPSCSVLHCPAACTCSNNIVDCRGKGLTEIPTNLPE). An intrachain disulfide couples cysteine 277 to cysteine 286. LRR repeat units lie at residues 301 to 322 (TITE…AFSP), 325 to 346 (KLRR…AFQG), 349 to 370 (SLNS…LFEG), 373 to 394 (SLQL…AFQD), and 397 to 418 (NLNL…TFSP). The region spanning 430 to 480 (NPFICDCHLKWLADYLHTNPIETSGARCTSPRRLANKRIGQIKSKKFRCSA) is the LRRCT 2 domain. Cystine bridges form between cysteine 434–cysteine 457, cysteine 436–cysteine 478, cysteine 506–cysteine 512, and cysteine 510–cysteine 519. One can recognise an LRRNT 3 domain in the interval 497–533 (SGDCFADLACPEKCRCEGTTVDCSNQKLNKIPEHIPQ). LRR repeat units lie at residues 534–555 (YTAE…GIFK), 559–580 (QLRK…AFEG), 583–604 (GVNE…MFKG), 607–628 (SLKT…SFIG), and 631–652 (SVRL…AFDT). The N-linked (GlcNAc...) asparagine glycan is linked to asparagine 564. Asparagine 623 carries N-linked (GlcNAc...) asparagine glycosylation. The 51-residue stretch at 664-714 (NPFNCNCYLAWLGEWLRKKRIVTGNPRCQKPYFLKEIPIQDVAIQDFTCDD) folds into the LRRCT 3 domain. 4 cysteine pairs are disulfide-bonded: cysteine 668-cysteine 691, cysteine 670-cysteine 712, cysteine 727-cysteine 733, and cysteine 731-cysteine 740. The 37-residue stretch at 718–754 (DNSCSPLSRCPTECTCLDTVVRCSNKGLKVLPKGIPR) folds into the LRRNT 4 domain. LRR repeat units lie at residues 755-777 (DVTE…SNYK), 778-799 (HLTL…SFSN), 802-823 (QLLT…TFDG), and 826-847 (SLRL…AFND). N-linked (GlcNAc...) asparagine glycosylation is found at asparagine 794 and asparagine 799. Residues 859-909 (NPLYCDCNMQWLSDWVKSEYKEPGIARCAGPGEMADKLLLTTPSKKFTCQG) form the LRRCT 4 domain. Disulfide bonds link cysteine 863–cysteine 886, cysteine 865–cysteine 907, cysteine 922–cysteine 933, cysteine 927–cysteine 943, cysteine 945–cysteine 954, cysteine 961–cysteine 972, cysteine 966–cysteine 984, cysteine 986–cysteine 995, cysteine 1002–cysteine 1013, cysteine 1007–cysteine 1022, cysteine 1024–cysteine 1033, cysteine 1040–cysteine 1053, cysteine 1047–cysteine 1062, cysteine 1064–cysteine 1073, cysteine 1080–cysteine 1091, cysteine 1085–cysteine 1100, cysteine 1102–cysteine 1111, cysteine 1125–cysteine 1136, cysteine 1130–cysteine 1145, and cysteine 1147–cysteine 1156. EGF-like domains are found at residues 918-955 (KCNP…QDCD) and 957-996 (PIHA…ENCE). Residues 998 to 1034 (NVDDCEDNDCENNSTCVDGINNYTCLCPPEYTGELCE) form the EGF-like 3; calcium-binding domain. N-linked (GlcNAc...) asparagine glycans are attached at residues asparagine 1009, asparagine 1010, and asparagine 1019. Positions 1036–1074 (KLDFCAQDLNPCQHDSKCILTPKGFKCDCTPGYVGEHCD) constitute an EGF-like 4 domain. Residues 1076–1112 (DFDDCQDNKCKNGAHCTDAVNGYTCICPEGYSGLFCE) form the EGF-like 5; calcium-binding domain. The EGF-like 6 domain maps to 1121–1157 (RTSPCDNFDCQNGAQCIVRINEPICQCLPGYQGEKCE). Residues 1160 to 1333 (VSVNFINKES…PMQTGILPGC (174 aa)) form the Laminin G-like domain. Residues asparagine 1183, asparagine 1266, and asparagine 1300 are each glycosylated (N-linked (GlcNAc...) asparagine). 14 disulfides stabilise this stretch: cysteine 1307–cysteine 1333, cysteine 1336–cysteine 1346, cysteine 1341–cysteine 1356, cysteine 1358–cysteine 1367, cysteine 1375–cysteine 1385, cysteine 1380–cysteine 1395, cysteine 1397–cysteine 1406, cysteine 1416–cysteine 1426, cysteine 1421–cysteine 1436, cysteine 1438–cysteine 1447, cysteine 1453–cysteine 1492, cysteine 1471–cysteine 1506, cysteine 1482–cysteine 1522, and cysteine 1486–cysteine 1524. Residues 1332–1368 (GCEPCHKKVCAHGTCQPSSQAGFTCECQEGWMGPLCD) form the EGF-like 7 domain. The CTCK domain maps to 1453-1528 (CRGERIRDYY…VVKCGCTRCV (76 aa)).

Interacts with GREM1. Homodimer. Binds ROBO1 and ROBO2 with high affinity. As to expression, fetal lung and kidney, and adult spinal cord. Weak expression in adult adrenal gland, thyroid, trachea and other tissues examined.

The protein resides in the secreted. Functionally, thought to act as molecular guidance cue in cellular migration, and function appears to be mediated by interaction with roundabout homolog receptors. During neural development involved in axonal navigation at the ventral midline of the neural tube and projection of axons to different regions. SLIT1 and SLIT2 seem to be essential for midline guidance in the forebrain by acting as repulsive signal preventing inappropriate midline crossing by axons projecting from the olfactory bulb. In spinal cord development may play a role in guiding commissural axons once they reached the floor plate by modulating the response to netrin. In vitro, silences the attractive effect of NTN1 but not its growth-stimulatory effect and silencing requires the formation of a ROBO1-DCC complex. May be implicated in spinal cord midline post-crossing axon repulsion. In vitro, only commissural axons that crossed the midline responded to SLIT2. In the developing visual system appears to function as repellent for retinal ganglion axons by providing a repulsion that directs these axons along their appropriate paths prior to, and after passage through, the optic chiasm. In vitro, collapses and repels retinal ganglion cell growth cones. Seems to play a role in branching and arborization of CNS sensory axons, and in neuronal cell migration. In vitro, Slit homolog 2 protein N-product, but not Slit homolog 2 protein C-product, repels olfactory bulb (OB) but not dorsal root ganglia (DRG) axons, induces OB growth cones collapse and induces branching of DRG axons. Seems to be involved in regulating leukocyte migration. This Homo sapiens (Human) protein is Slit homolog 2 protein (SLIT2).